A 707-amino-acid chain; its full sequence is Elongation factor G (707 aa).

The tr-type G domain occupies 8-290 (ERYRNIGICA…AVIEYLPSPT (283 aa)). Residues 17 to 24 (AHVDAGKT), 88 to 92 (DTPGH), and 142 to 145 (NKMD) contribute to the GTP site.

This sequence belongs to the TRAFAC class translation factor GTPase superfamily. Classic translation factor GTPase family. EF-G/EF-2 subfamily.

It localises to the cytoplasm. Catalyzes the GTP-dependent ribosomal translocation step during translation elongation. During this step, the ribosome changes from the pre-translocational (PRE) to the post-translocational (POST) state as the newly formed A-site-bound peptidyl-tRNA and P-site-bound deacylated tRNA move to the P and E sites, respectively. Catalyzes the coordinated movement of the two tRNA molecules, the mRNA and conformational changes in the ribosome. This Idiomarina loihiensis (strain ATCC BAA-735 / DSM 15497 / L2-TR) protein is Elongation factor G.